Reading from the N-terminus, the 271-residue chain is Centromere protein K (271 aa).

2 coiled-coil regions span residues D11 to L44 and L102 to Q151.

This sequence belongs to the CENP-K/MCM22 family. As to quaternary structure, component of the CENPA-CAD complex, composed of CENPI, CENPK, CENPL, CENPO, CENPP, CENPQ, CENPR and CENPS. The CENPA-CAD complex interacts with the CENPA-NAC complex, at least composed of CENPA, CENPC, CENPH, CENPM, CENPN, CENPT and CENPU. May interact with Sox6. Highly expressed in testis.

Its subcellular location is the nucleus. It localises to the chromosome. It is found in the centromere. The protein localises to the kinetochore. Component of the CENPA-CAD (nucleosome distal) complex, a complex recruited to centromeres which is involved in assembly of kinetochore proteins, mitotic progression and chromosome segregation. May be involved in incorporation of newly synthesized CENPA into centromeres via its interaction with the CENPA-NAC complex. Acts in coordination with KNL1 to recruit the NDC80 complex to the outer kinetochore. The polypeptide is Centromere protein K (Cenpk) (Mus musculus (Mouse)).